We begin with the raw amino-acid sequence, 422 residues long: C-type lectin domain family 4 member M (422 aa).

Residues 1 to 49 (MSDSKEPRVQPLGLLEEDPTTSGIRLFPRDFQFQQTHGHKSSTGCLGHG) lie on the Cytoplasmic side of the membrane. Positions 14–15 (LL) match the Endocytosis signal motif. Residues 50-70 (PLVLQLLSFALLAGVLVAILV) traverse the membrane as a helical; Signal-anchor for type II membrane protein segment. At 71–422 (QVYKVPSSLS…KKPIACFRDE (352 aa)) the chain is on the extracellular side. N-linked (GlcNAc...) asparagine glycosylation is present at N92. 8 consecutive repeat copies span residues 108–130 (KLQE…PEKS), 131–151 (KQQE…ELPE), 154–176 (QLQE…PEES), 177–199 (RLQE…PEKS), 200–222 (RLQE…PEKS), 223–245 (RLQE…PEKS), 246–268 (KLQE…PDQS), and 269–291 (KQQQ…CCRC). The segment at 108–292 (KLQEIYQELT…AFERLCCRCP (185 aa)) is 8 X approximate tandem repeats. 4 disulfide bridges follow: C288–C418, C291–C302, C319–C412, and C391–C404. The C-type lectin domain occupies 297 to 413 (FFQGNCYFMS…CNVDNYWICK (117 aa)). Ca(2+) is bound by residues E382, N384, S386, E389, N400, and D401. An N-linked (GlcNAc...) asparagine glycan is attached at N384.

In terms of assembly, homotetramer.

The protein localises to the membrane. Its function is as follows. Probable pathogen-recognition receptor involved in peripheral immune surveillance in liver. May mediate the endocytosis of pathogens which are subsequently degraded in lysosomal compartments. Probably recognizes in a calcium-dependent manner high mannose N-linked oligosaccharides in a variety of pathogen antigens. Is a receptor for ICAM3, probably by binding to mannose-like carbohydrates. The sequence is that of C-type lectin domain family 4 member M (CLEC4M) from Symphalangus syndactylus (Siamang).